The following is a 96-amino-acid chain: Co-chaperonin GroES 2 (96 aa).

It belongs to the GroES chaperonin family. In terms of assembly, heptamer of 7 subunits arranged in a ring. Interacts with the chaperonin GroEL.

Its subcellular location is the cytoplasm. Functionally, together with the chaperonin GroEL, plays an essential role in assisting protein folding. The GroEL-GroES system forms a nano-cage that allows encapsulation of the non-native substrate proteins and provides a physical environment optimized to promote and accelerate protein folding. GroES binds to the apical surface of the GroEL ring, thereby capping the opening of the GroEL channel. This chain is Co-chaperonin GroES 2, found in Vibrio cholerae serotype O1 (strain ATCC 39315 / El Tor Inaba N16961).